The primary structure comprises 352 residues: Mitochondrial ubiquitin ligase activator of NFKB 1 (352 aa).

The Cytoplasmic segment spans residues 1 to 8; sequence MESGGRPS. Residues 9–29 traverse the membrane as a helical segment; it reads LCQFILLGTTSVVTAALYSVY. Topologically, residues 30 to 238 are mitochondrial intermembrane; that stretch reads RQKARVSQEL…LLQRQESSVR (209 aa). Lysine 52 participates in a covalent cross-link: Glycyl lysine isopeptide (Lys-Gly) (interchain with G-Cter in ubiquitin). Residues 239-259 traverse the membrane as a helical segment; sequence LWKVLALVFGFATCATLFFIL. Topologically, residues 260-352 are cytoplasmic; it reads RKQYLQRQER…ITRVIPLYNS (93 aa). Glycyl lysine isopeptide (Lys-Gly) (interchain with G-Cter in ubiquitin) cross-links involve residues lysine 273 and lysine 299. The RING-type zinc-finger motif lies at 302–340; the sequence is CVVCLSSFKSCVFLECGHVCSCTECYRALPEPKKCPICR.

In terms of assembly, homooligomer. Interacts with MAP3K7/TAK1. Interacts with UBC9. Interacts with and sumoylates DNM1L. Interacts with MAVS. Interacts with TP53 (via N-terminus); the interaction leads to ubiquitination and proteasomal degradation of TP53. Post-translationally, ubiquitinated by PRKN during mitophagy, leading to its degradation and enhancement of mitophagy. Deubiquitinated by USP30. In terms of tissue distribution, widely expressed with highest levels in the heart, skeletal muscle, placenta, kidney and liver. Barely detectable in colon and thymus.

Its subcellular location is the mitochondrion outer membrane. The protein resides in the peroxisome. It carries out the reaction S-ubiquitinyl-[E2 ubiquitin-conjugating enzyme]-L-cysteine + [acceptor protein]-L-lysine = [E2 ubiquitin-conjugating enzyme]-L-cysteine + N(6)-ubiquitinyl-[acceptor protein]-L-lysine.. It functions in the pathway protein modification; protein ubiquitination. Its pathway is protein modification; protein sumoylation. In terms of biological role, exhibits weak E3 ubiquitin-protein ligase activity. E3 ubiquitin ligases accept ubiquitin from an E2 ubiquitin-conjugating enzyme in the form of a thioester and then directly transfer the ubiquitin to targeted substrates. Can ubiquitinate AKT1 preferentially at 'Lys-284' involving 'Lys-48'-linked polyubiquitination and seems to be involved in regulation of Akt signaling by targeting phosphorylated Akt to proteasomal degradation. Mediates polyubiquitination of cytoplasmic TP53 at 'Lys-24' which targets TP53 for proteasomal degradation, thus reducing TP53 levels in the cytoplasm and mitochondrion. Proposed to preferentially act as a SUMO E3 ligase at physiological concentrations. Plays a role in the control of mitochondrial morphology by promoting mitochondrial fragmentation, and influences mitochondrial localization. Likely to promote mitochondrial fission through negatively regulating the mitochondrial fusion proteins MFN1 and MFN2, acting in a pathway that is parallel to the PRKN/PINK1 regulatory pathway. May also be involved in the sumoylation of the membrane fission protein DNM1L. Inhibits cell growth. When overexpressed, activates JNK through MAP3K7/TAK1 and induces caspase-dependent apoptosis. Involved in the modulation of innate immune defense against viruses by inhibiting RIGI-dependent antiviral response. Can mediate RIGI sumoylation and disrupt its polyubiquitination. This is Mitochondrial ubiquitin ligase activator of NFKB 1 (MUL1) from Homo sapiens (Human).